A 283-amino-acid polypeptide reads, in one-letter code: MKQYLQLCQRIVDEGVWVKNERTGINCLTVINADLEYDVANNQFPLITTRKSYYKSAIAELLGYLRGYNSAAQFRDIGCKTWDANANENQAWLNNPNRKGEDDMGRVYGVQGRSWQKPDGSHLDQLKKVINNLSKGIDDRGEIVTFYNPGEFELGCLRPCMHTHNFSLLGDTLYLTSYQRSCDVPLGLNFNQIQCFALLALVAQITGHKPGKAYHKIVNAHIYENQLELMRDVQLKREPFPSPQLHINPEIKSLEDIETWVSKDDFIVSGYQCHDPIKYPFAV.

DUMP is bound at residue arginine 22. The active-site Nucleophile is the cysteine 160. Residues 180-183, asparagine 191, and 221-223 contribute to the dUMP site; these read RSCD and HIY. Aspartate 183 lines the (6R)-5,10-methylene-5,6,7,8-tetrahydrofolate pocket. Position 282 (alanine 282) interacts with (6R)-5,10-methylene-5,6,7,8-tetrahydrofolate.

The protein belongs to the thymidylate synthase family. Bacterial-type ThyA subfamily. As to quaternary structure, homodimer.

The protein localises to the cytoplasm. It carries out the reaction dUMP + (6R)-5,10-methylene-5,6,7,8-tetrahydrofolate = 7,8-dihydrofolate + dTMP. It functions in the pathway pyrimidine metabolism; dTTP biosynthesis. In terms of biological role, catalyzes the reductive methylation of 2'-deoxyuridine-5'-monophosphate (dUMP) to 2'-deoxythymidine-5'-monophosphate (dTMP) while utilizing 5,10-methylenetetrahydrofolate (mTHF) as the methyl donor and reductant in the reaction, yielding dihydrofolate (DHF) as a by-product. This enzymatic reaction provides an intracellular de novo source of dTMP, an essential precursor for DNA biosynthesis. This chain is Thymidylate synthase, found in Idiomarina loihiensis (strain ATCC BAA-735 / DSM 15497 / L2-TR).